The sequence spans 35 residues: Basic endochitinase CH1 (35 aa).

It belongs to the glycosyl hydrolase 19 family. Chitinase class I subfamily.

The enzyme catalyses Random endo-hydrolysis of N-acetyl-beta-D-glucosaminide (1-&gt;4)-beta-linkages in chitin and chitodextrins.. Functionally, defense against chitin-containing fungal pathogens. The sequence is that of Basic endochitinase CH1 from Castanea sativa (Sweet chestnut).